A 258-amino-acid chain; its full sequence is 5'-nucleotidase SurE (258 aa).

Residues aspartate 9, aspartate 10, serine 42, and asparagine 95 each contribute to the a divalent metal cation site.

It belongs to the SurE nucleotidase family. It depends on a divalent metal cation as a cofactor.

It localises to the cytoplasm. It carries out the reaction a ribonucleoside 5'-phosphate + H2O = a ribonucleoside + phosphate. In terms of biological role, nucleotidase that shows phosphatase activity on nucleoside 5'-monophosphates. In Campylobacter concisus (strain 13826), this protein is 5'-nucleotidase SurE.